The following is a 341-amino-acid chain: Phenylalanine--tRNA ligase alpha subunit (341 aa).

Glutamate 255 lines the Mg(2+) pocket.

It belongs to the class-II aminoacyl-tRNA synthetase family. Phe-tRNA synthetase alpha subunit type 1 subfamily. In terms of assembly, tetramer of two alpha and two beta subunits. It depends on Mg(2+) as a cofactor.

Its subcellular location is the cytoplasm. The catalysed reaction is tRNA(Phe) + L-phenylalanine + ATP = L-phenylalanyl-tRNA(Phe) + AMP + diphosphate + H(+). This is Phenylalanine--tRNA ligase alpha subunit from Natranaerobius thermophilus (strain ATCC BAA-1301 / DSM 18059 / JW/NM-WN-LF).